We begin with the raw amino-acid sequence, 315 residues long: Methionyl-tRNA formyltransferase (315 aa).

113–116 is a (6S)-5,6,7,8-tetrahydrofolate binding site; it reads SILP.

This sequence belongs to the Fmt family.

It carries out the reaction L-methionyl-tRNA(fMet) + (6R)-10-formyltetrahydrofolate = N-formyl-L-methionyl-tRNA(fMet) + (6S)-5,6,7,8-tetrahydrofolate + H(+). Its function is as follows. Attaches a formyl group to the free amino group of methionyl-tRNA(fMet). The formyl group appears to play a dual role in the initiator identity of N-formylmethionyl-tRNA by promoting its recognition by IF2 and preventing the misappropriation of this tRNA by the elongation apparatus. This is Methionyl-tRNA formyltransferase from Aliivibrio fischeri (strain ATCC 700601 / ES114) (Vibrio fischeri).